A 688-amino-acid polypeptide reads, in one-letter code: Glycine--tRNA ligase beta subunit (688 aa).

Belongs to the class-II aminoacyl-tRNA synthetase family. In terms of assembly, tetramer of two alpha and two beta subunits.

It localises to the cytoplasm. The enzyme catalyses tRNA(Gly) + glycine + ATP = glycyl-tRNA(Gly) + AMP + diphosphate. The sequence is that of Glycine--tRNA ligase beta subunit from Shewanella sp. (strain MR-4).